Consider the following 1470-residue polypeptide: MDVTKKSKRDGTEVTERIVTETVTTRLTSLPPKGSTSNGYAKTGSLGGGSRLEKQSLTHGSSGYINSSGSIRGNASTSSYRRTHSPASTLPNSPGSTFERKAHMTRHGTYEGSSSGNSSPEYPRKELASSSTRGRSQTRESEIRVRLQSASPSTRWTELDEVKRLLKGSRSASASPTRNTSNTLPIPKKGTVETKTVTASSHSVSGTYDSAILDTNFPPHMWSSTLPAGSSLGTYQNNITAQSTSLLNTNAYSTGSVFGVPNNMASCSPTLHPGLSSCSSVFGMQNNLAPSSSVLSHGTTTASTAYGAKKNVPQPPTVTSTGVSTSATCTTSVQSDDLLHKDCKFLILEKDNTPAKKEMELLIMTKDSGKVFTASPATISSTSFSEDTLKKEKQAAYAADTCLKADVNGDLNTVSTKSKMTSAENHGYDRGGGGGRGKGGGAGGGGGGGGASGGGGAWGAAPAWCPCGSCCSWWKWLLGLLLTWLLLLGLLFGLIALAEEVRKLKARVEELEKTKVLYHDVQMDKSNRDRLQAEAPSLGPGLGKAELDGYSQEAIWLFVRNKLMTEQENGNLRGSPGPKGDMGSQGPKGDRGLPGTPGIPGPLGHPGPEGPKGQKGSIGDPGMEGPIGQRGLAGPMGPRGEPGPPGSGEKGDRGIAGEQGPQGLPGVPGPPGLRGHSGSPGPQGPPGAVGPQGLRGDVGLPGVKGDKGLMGPPGPKGDQGEKGPRGLTGEPGIRGLPGAVGEPGAKGAMGPAGADGQQGSRGEQGLTGMPGTRGPPGPAGDPGKPGLTGPQGPQGLPGSPGRPGTKGEPGAPGRVMTSEGSSTITVPGPPGPPGAMGPPGPPGTPGPAGPAGLPGQQGPRGEPGLAGDSFLSSGSSISEVLSAQGVDLRGPPGPPGPRGPPGPSIPGPPGPRGPPGEGVPGPPGPPGSFLTDSETFFTGPPGPPGPPGPKGDQGDPGVPGTPGISGGLSHGASSSTLYMQGPPGPPGPPGPPGSLSSSGQDIQHYIAEYMQSDNIRTYLSGVQGPPGPPGPPGPVITITGETFDYSQLASQVVSYLRSSGYGAGLSSASSSEDILAMLRRNDVWQYLRQNLVGPPGPPGPPGVSGDGSLLSLDYGELSRHILNYMSSSGISFGHPGPPGPPGLPGTSYEELLTMLRGSDYRNIIGPPGPPGPPGMPGNAWSSISVEDLSSYLHTAGLSSIPGPPGPPGPPGPRGPPGVSAALSTYAAENSDNFRSELISYLTSPDVRSFIVGPPGPPGPQGPPGDGHLRENYNWSSNSSARRGTSYSSSTGTGGTNGGSLGEGGAYGAGDGGPYGTDIGPGGGYGAAAGGGIYGTNGDSFRDGFTGDLDYNKLAVRVSESMQRQGLLQGMAYTVQGPPGPQGPPGISRVFSAYSNVTQDLMDFFQTYGTIPGPPGQKGDVGTPGPKGDRGPAGPRGPPGPPGPRGNKGEKGDKGDQVYTGRRKRSIAIKP.

Disordered stretches follow at residues 1–155 (MDVT…PSTR), 167–193 (KGSR…GTVE), and 422–452 (SAEN…GGAS). Residues 1-476 (MDVTKKSKRD…CGSCCSWWKW (476 aa)) lie on the Cytoplasmic side of the membrane. The segment at 1–573 (MDVTKKSKRD…MTEQENGNLR (573 aa)) is nonhelical region (NC16). Over residues 9-19 (RDGTEVTERIV) the composition is skewed to basic and acidic residues. Low complexity predominate over residues 60–74 (GSSGYINSSGSIRGN). Polar residues-rich tracts occupy residues 75–96 (ASTS…SPGS), 111–120 (EGSSSGNSSP), and 170–184 (RSAS…SNTL). The necessary for interaction with DST and for the recruitment of DST to hemidesmosome stretch occupies residues 146-231 (RLQSASPSTR…WSSTLPAGSS (86 aa)). Residues 430–452 (RGGGGGRGKGGGAGGGGGGGGAS) are compositionally biased toward gly residues. The chain crosses the membrane as a helical; Signal-anchor for type II membrane protein span at residues 477–497 (LLGLLLTWLLLLGLLFGLIAL). Residues 498 to 1470 (AEEVRKLKAR…RRKRSIAIKP (973 aa)) lie on the Extracellular side of the membrane. Residue serine 551 is modified to Phosphoserine; by CK2. Disordered regions lie at residues 568-873 (ENGN…FLSS), 885-999 (GVDL…SSSG), 1159-1181 (DYRN…NAWS), 1194-1220 (TAGL…GVSA), and 1249-1298 (FIVG…TNGG). The segment at 574 to 1456 (GSPGPKGDMG…KGEKGDKGDQ (883 aa)) is triple-helical region. A compositionally biased stretch (pro residues) spans 597 to 609 (PGIPGPLGHPGPE). Composition is skewed to low complexity over residues 742-755 (EPGA…AGAD) and 781-803 (DPGK…PGRP). A compositionally biased stretch (pro residues) spans 827 to 848 (PGPPGPPGAMGPPGPPGTPGPA). Over residues 850–873 (PAGLPGQQGPRGEPGLAGDSFLSS) the composition is skewed to low complexity. Composition is skewed to pro residues over residues 891-914 (PPGP…PRGP), 940-949 (PPGPPGPPGP), 982-992 (PPGPPGPPGPP), 1166-1175 (PPGPPGPPGM), 1201-1215 (PGPP…PRGP), and 1253-1262 (PPGPPGPQGP). An N-linked (GlcNAc...) asparagine glycan is attached at asparagine 1273. A compositionally biased stretch (low complexity) spans 1275–1290 (SSNSSARRGTSYSSST). Residue asparagine 1395 is glycosylated (N-linked (GlcNAc...) asparagine). The interval 1406–1470 (TYGTIPGPPG…RRKRSIAIKP (65 aa)) is disordered. Residues 1434–1443 (PRGPPGPPGP) show a composition bias toward pro residues. Residues 1446-1455 (NKGEKGDKGD) are compositionally biased toward basic and acidic residues. Residues 1457–1470 (VYTGRRKRSIAIKP) form a nonhelical region (NC1) region. Residues 1460 to 1470 (GRRKRSIAIKP) show a composition bias toward basic residues.

Homotrimers of alpha 1(XVII)chains. Interacts (via cytoplasmic region) with ITGB4 (via cytoplasmic region). Interacts (via cytoplasmic region) with DST (via N-terminus). Interacts (via N-terminus) with PLEC. Interacts (via cytoplasmic region) with DSP. The intracellular/endo domain is disulfide-linked. Post-translationally, prolines at the third position of the tripeptide repeating unit (G-X-Y) are hydroxylated in some or all of the chains. In terms of processing, the ectodomain is shedded from the surface of keratinocytes resulting in a 120-kDa soluble form, also named as 120 kDa linear IgA disease antigen homolog. The shedding is mediated by membrane-bound metalloproteases. This cleavage is inhibited by phosphorylation at Ser-551.

The protein resides in the cell junction. It is found in the hemidesmosome. It localises to the membrane. The protein localises to the secreted. Its subcellular location is the extracellular space. The protein resides in the extracellular matrix. It is found in the basement membrane. Functionally, may play a role in the integrity of hemidesmosome and the attachment of basal keratinocytes to the underlying basement membrane. In terms of biological role, the 120 kDa linear IgA disease antigen homolog is an anchoring filament component involved in dermal-epidermal cohesion. The sequence is that of Collagen alpha-1(XVII) chain (Col17a1) from Mus musculus (Mouse).